The primary structure comprises 325 residues: Interleukin-10 receptor subunit beta (325 aa).

An N-terminal signal peptide occupies residues 1–19; the sequence is MAWSLGSWLGGCLLVSALG. The Extracellular segment spans residues 20–220; the sequence is MVPPPENVRM…QTTHDETVPS (201 aa). 2 consecutive Fibronectin type-III domains span residues 23-111 and 114-216; these read PPEN…VDDT and GPPG…THDE. 4 N-linked (GlcNAc...) asparagine glycosylation sites follow: Asn49, Asn68, Asn102, and Asn161. Cys66 and Cys74 are disulfide-bonded. Cys188 and Cys209 form a disulfide bridge. The chain crosses the membrane as a helical span at residues 221–242; that stretch reads WMVAVILMASVFMVCLALLGCF. Residues 243 to 325 are Cytoplasmic-facing; the sequence is ALLWCVYKKT…GTPPGQGPQS (83 aa). The disordered stretch occupies residues 301-325; that stretch reads DSESGKQNPGDSCSLGTPPGQGPQS. Polar residues predominate over residues 305 to 315; it reads GKQNPGDSCSL.

It belongs to the type II cytokine receptor family. As to quaternary structure, heterodimer with IFNLR1.

The protein resides in the membrane. Its function is as follows. Shared cell surface receptor required for the activation of five class 2 cytokines: IL10, IL22, IL26, IL28, and IFNL1. The IFNLR1/IL10RB dimer is a receptor for the cytokine ligands IFNL2 and IFNL3 and mediates their antiviral activity. The ligand/receptor complex stimulate the activation of the JAK/STAT signaling pathway leading to the expression of IFN-stimulated genes (ISG), which contribute to the antiviral state. The polypeptide is Interleukin-10 receptor subunit beta (IL10RB) (Homo sapiens (Human)).